A 207-amino-acid polypeptide reads, in one-letter code: Small ribosomal subunit protein uS4 (207 aa).

The interval Lys-26–Ser-53 is disordered. In terms of domain architecture, S4 RNA-binding spans Ser-97–Ala-159.

This sequence belongs to the universal ribosomal protein uS4 family. In terms of assembly, part of the 30S ribosomal subunit. Contacts protein S5. The interaction surface between S4 and S5 is involved in control of translational fidelity.

One of the primary rRNA binding proteins, it binds directly to 16S rRNA where it nucleates assembly of the body of the 30S subunit. Functionally, with S5 and S12 plays an important role in translational accuracy. This is Small ribosomal subunit protein uS4 from Acinetobacter baylyi (strain ATCC 33305 / BD413 / ADP1).